Consider the following 315-residue polypeptide: Sulfate adenylyltransferase subunit 2 1 (315 aa).

The segment at 287-315 (DSSSSERQGRAIDHDQSGSMERKKREGYF) is disordered. The segment covering 293–315 (RQGRAIDHDQSGSMERKKREGYF) has biased composition (basic and acidic residues).

The protein belongs to the PAPS reductase family. CysD subfamily. In terms of assembly, heterodimer composed of CysD, the smaller subunit, and CysN.

The catalysed reaction is sulfate + ATP + H(+) = adenosine 5'-phosphosulfate + diphosphate. Its pathway is sulfur metabolism; hydrogen sulfide biosynthesis; sulfite from sulfate: step 1/3. Its function is as follows. With CysN forms the ATP sulfurylase (ATPS) that catalyzes the adenylation of sulfate producing adenosine 5'-phosphosulfate (APS) and diphosphate, the first enzymatic step in sulfur assimilation pathway. APS synthesis involves the formation of a high-energy phosphoric-sulfuric acid anhydride bond driven by GTP hydrolysis by CysN coupled to ATP hydrolysis by CysD. The protein is Sulfate adenylyltransferase subunit 2 1 of Alkalilimnicola ehrlichii (strain ATCC BAA-1101 / DSM 17681 / MLHE-1).